Consider the following 124-residue polypeptide: Holo-[acyl-carrier-protein] synthase (124 aa).

Asp8 and Glu56 together coordinate Mg(2+).

This sequence belongs to the P-Pant transferase superfamily. AcpS family. It depends on Mg(2+) as a cofactor.

Its subcellular location is the cytoplasm. The enzyme catalyses apo-[ACP] + CoA = holo-[ACP] + adenosine 3',5'-bisphosphate + H(+). Its function is as follows. Transfers the 4'-phosphopantetheine moiety from coenzyme A to a Ser of acyl-carrier-protein. The polypeptide is Holo-[acyl-carrier-protein] synthase (Nitratidesulfovibrio vulgaris (strain DP4) (Desulfovibrio vulgaris)).